We begin with the raw amino-acid sequence, 149 residues long: Transcriptional repressor NrdR (149 aa).

The segment at 3-34 (CPFCSATDTKVIDSRLVADGHQVRRRRECVQC) is a zinc-finger region. One can recognise an ATP-cone domain in the interval 49–139 (PRVVKQDGSR…VYRAFEDVSE (91 aa)).

It belongs to the NrdR family. It depends on Zn(2+) as a cofactor.

Functionally, negatively regulates transcription of bacterial ribonucleotide reductase nrd genes and operons by binding to NrdR-boxes. The sequence is that of Transcriptional repressor NrdR from Shewanella halifaxensis (strain HAW-EB4).